Here is a 496-residue protein sequence, read N- to C-terminus: Lysine--tRNA ligase (496 aa).

Mg(2+) contacts are provided by Glu409 and Glu416.

This sequence belongs to the class-II aminoacyl-tRNA synthetase family. Homodimer. Mg(2+) is required as a cofactor.

It is found in the cytoplasm. It catalyses the reaction tRNA(Lys) + L-lysine + ATP = L-lysyl-tRNA(Lys) + AMP + diphosphate. This Streptococcus suis (strain 05ZYH33) protein is Lysine--tRNA ligase.